A 110-amino-acid polypeptide reads, in one-letter code: Auxin-responsive protein SAUR71 (110 aa).

This sequence belongs to the ARG7 family. As to expression, highly expressed in the steles of roots and hypocotyls.

Its subcellular location is the cytoplasm. In terms of biological role, plays a role in the regulation of cell expansion, root meristem patterning and auxin transport. In Arabidopsis thaliana (Mouse-ear cress), this protein is Auxin-responsive protein SAUR71.